The sequence spans 576 residues: Glutamine-dependent NAD(+) synthetase (576 aa).

Positions 4–246 (LRVTLAQLNP…EEIITVDLDL (243 aa)) constitute a CN hydrolase domain. E44 serves as the catalytic Proton acceptor; for glutaminase activity. The For glutaminase activity role is filled by K112. Y118 contacts L-glutamine. The active-site Nucleophile; for glutaminase activity is C148. Residues S176 and K182 each contribute to the L-glutamine site. Positions 292 to 576 (PVREEEMFRA…PITNRFKEPL (285 aa)) are ligase. Residue 321-328 (GLSGGMDS) participates in ATP binding. N404 contributes to the deamido-NAD(+) binding site. ATP is bound at residue T428. Positions 433 and 545 each coordinate deamido-NAD(+).

This sequence in the C-terminal section; belongs to the NAD synthetase family.

The enzyme catalyses deamido-NAD(+) + L-glutamine + ATP + H2O = L-glutamate + AMP + diphosphate + NAD(+) + H(+). The protein operates within cofactor biosynthesis; NAD(+) biosynthesis; NAD(+) from deamido-NAD(+) (L-Gln route): step 1/1. Its function is as follows. Catalyzes the ATP-dependent amidation of deamido-NAD to form NAD. Uses L-glutamine as a nitrogen source. This Thermotoga maritima (strain ATCC 43589 / DSM 3109 / JCM 10099 / NBRC 100826 / MSB8) protein is Glutamine-dependent NAD(+) synthetase (nadE2).